The primary structure comprises 402 residues: Phosphoglycerate kinase (402 aa).

Substrate is bound by residues 21 to 23 (DLN), Arg-36, 59 to 62 (HLGR), Arg-114, and Arg-147. ATP contacts are provided by residues Lys-202, Glu-329, and 355–358 (GGDT).

This sequence belongs to the phosphoglycerate kinase family. Monomer.

The protein resides in the cytoplasm. The catalysed reaction is (2R)-3-phosphoglycerate + ATP = (2R)-3-phospho-glyceroyl phosphate + ADP. It functions in the pathway carbohydrate degradation; glycolysis; pyruvate from D-glyceraldehyde 3-phosphate: step 2/5. This chain is Phosphoglycerate kinase, found in Psychrobacter sp. (strain PRwf-1).